Here is a 292-residue protein sequence, read N- to C-terminus: uncharacterized protein (292 aa).

A helical transmembrane segment spans residues 17 to 37 (SMDMFFFLFIFLLFIYPEMMM).

To M.jannaschii MJ0137.

The protein localises to the membrane. This is an uncharacterized protein from Methanocaldococcus jannaschii (strain ATCC 43067 / DSM 2661 / JAL-1 / JCM 10045 / NBRC 100440) (Methanococcus jannaschii).